We begin with the raw amino-acid sequence, 780 residues long: Probable trehalase (780 aa).

Positions 1–48 (MVDFLPKVTEINPPSEGNDGEDNIKPLSSGSEQRPLKEEGQQGGRRHH) are disordered. Phosphoserine occurs at positions 52 and 53. T88 carries the phosphothreonine modification. Phosphoserine is present on S112. Residues R331, 338–339 (WD), N375, R384, 384–386 (RSQ), and G505 contribute to the substrate site. Catalysis depends on proton donor/acceptor residues D507 and E703.

Belongs to the glycosyl hydrolase 37 family.

It catalyses the reaction alpha,alpha-trehalose + H2O = alpha-D-glucose + beta-D-glucose. This chain is Probable trehalase (NTH2), found in Saccharomyces cerevisiae (strain ATCC 204508 / S288c) (Baker's yeast).